The following is a 260-amino-acid chain: Type III pantothenate kinase (260 aa).

ATP is bound at residue 6-13; sequence DAGNTNIV. 108-111 contacts substrate; sequence GADR. The active-site Proton acceptor is the aspartate 110. Aspartate 130 is a binding site for K(+). Threonine 133 serves as a coordination point for ATP. Threonine 187 provides a ligand contact to substrate.

Belongs to the type III pantothenate kinase family. As to quaternary structure, homodimer. It depends on NH4(+) as a cofactor. The cofactor is K(+).

The protein localises to the cytoplasm. The catalysed reaction is (R)-pantothenate + ATP = (R)-4'-phosphopantothenate + ADP + H(+). Its pathway is cofactor biosynthesis; coenzyme A biosynthesis; CoA from (R)-pantothenate: step 1/5. Its function is as follows. Catalyzes the phosphorylation of pantothenate (Pan), the first step in CoA biosynthesis. The chain is Type III pantothenate kinase from Rhizorhabdus wittichii (strain DSM 6014 / CCUG 31198 / JCM 15750 / NBRC 105917 / EY 4224 / RW1) (Sphingomonas wittichii).